We begin with the raw amino-acid sequence, 213 residues long: Kynurenine formamidase (213 aa).

Trp18 is a substrate binding site. The Zn(2+) site is built by His48, His52, and Asp54. His58 (proton donor/acceptor) is an active-site residue. Zn(2+) contacts are provided by His160 and Glu172.

This sequence belongs to the Cyclase 1 superfamily. KynB family. As to quaternary structure, homodimer. Zn(2+) serves as cofactor.

It carries out the reaction N-formyl-L-kynurenine + H2O = L-kynurenine + formate + H(+). Its pathway is amino-acid degradation; L-tryptophan degradation via kynurenine pathway; L-kynurenine from L-tryptophan: step 2/2. Its function is as follows. Catalyzes the hydrolysis of N-formyl-L-kynurenine to L-kynurenine, the second step in the kynurenine pathway of tryptophan degradation. In Burkholderia vietnamiensis (strain G4 / LMG 22486) (Burkholderia cepacia (strain R1808)), this protein is Kynurenine formamidase.